A 288-amino-acid polypeptide reads, in one-letter code: Pantothenate synthetase (288 aa).

An ATP-binding site is contributed by 31 to 38 (MGNLHRGH). Histidine 38 acts as the Proton donor in catalysis. Position 62 (glutamine 62) interacts with (R)-pantoate. Glutamine 62 lines the beta-alanine pocket. Residue 150 to 153 (GQKD) coordinates ATP. Glutamine 156 serves as a coordination point for (R)-pantoate. ATP is bound by residues isoleucine 179 and 187–190 (LSSR).

Belongs to the pantothenate synthetase family. In terms of assembly, homodimer.

Its subcellular location is the cytoplasm. It carries out the reaction (R)-pantoate + beta-alanine + ATP = (R)-pantothenate + AMP + diphosphate + H(+). Its pathway is cofactor biosynthesis; (R)-pantothenate biosynthesis; (R)-pantothenate from (R)-pantoate and beta-alanine: step 1/1. Its function is as follows. Catalyzes the condensation of pantoate with beta-alanine in an ATP-dependent reaction via a pantoyl-adenylate intermediate. The protein is Pantothenate synthetase of Wigglesworthia glossinidia brevipalpis.